The primary structure comprises 313 residues: C-type lectin domain-containing protein 162 (313 aa).

The first 17 residues, 1–17 (MNIFTLLFIYFLSDTVA), serve as a signal peptide directing secretion. 2 N-linked (GlcNAc...) asparagine glycosylation sites follow: asparagine 28 and asparagine 41. The C-type lectin domain occupies 28-145 (NATGCFQFFR…DAMFLPFVCE (118 aa)). Cysteines 49 and 144 form a disulfide. N-linked (GlcNAc...) asparagine glycosylation is present at asparagine 213. The interval 244–313 (VSQTETEMSR…RSKTIQISRG (70 aa)) is disordered. The span at 250–259 (EMSRSRKEKE) shows a compositional bias: basic and acidic residues. N-linked (GlcNAc...) asparagine glycans are attached at residues asparagine 279 and asparagine 300. Basic and acidic residues predominate over residues 291-304 (SKEKREREENETIR).

Its subcellular location is the secreted. This is C-type lectin domain-containing protein 162 (clec-162) from Caenorhabditis elegans.